Consider the following 175-residue polypeptide: Ribosome maturation factor RimM (175 aa).

Positions 99-172 constitute a PRC barrel domain; the sequence is ADEYHVSDLI…RLEVDAPPGL (74 aa).

This sequence belongs to the RimM family. In terms of assembly, binds ribosomal protein uS19.

It is found in the cytoplasm. Its function is as follows. An accessory protein needed during the final step in the assembly of 30S ribosomal subunit, possibly for assembly of the head region. Essential for efficient processing of 16S rRNA. May be needed both before and after RbfA during the maturation of 16S rRNA. It has affinity for free ribosomal 30S subunits but not for 70S ribosomes. The sequence is that of Ribosome maturation factor RimM from Picosynechococcus sp. (strain ATCC 27264 / PCC 7002 / PR-6) (Agmenellum quadruplicatum).